The following is a 131-amino-acid chain: Large ribosomal subunit protein eL32 (131 aa).

The protein belongs to the eukaryotic ribosomal protein eL32 family.

This Sulfurisphaera tokodaii (strain DSM 16993 / JCM 10545 / NBRC 100140 / 7) (Sulfolobus tokodaii) protein is Large ribosomal subunit protein eL32 (rpl32e).